We begin with the raw amino-acid sequence, 513 residues long: Protein indeterminate-domain 11 (513 aa).

Residues 1–84 (MMNKDMLLHQ…QPGNPDPESE (84 aa)) form a disordered region. Residues 10-45 (QHQQPQQDENMSNLTSASGDQASVSSGNITEASGSN) are compositionally biased toward polar residues. Residues 51-60 (QQQQEQQQQQ) show a composition bias toward low complexity. Phosphoserine is present on S89. 2 consecutive C2H2-type zinc fingers follow at residues 99-121 (FVCE…RRGH) and 141-171 (YVCP…CRKH). A Nuclear localization signal motif is present at residues 163–170 (IKKHFCRK). The C2H2-type 2; degenerate zinc finger occupies 176-199 (WKCDKCSKKYAVQSDCKAHSKTCG). C178, C181, H194, C198, C205, C207, H220, and C224 together coordinate Zn(2+). Residues 203-226 (YRCDCGTLFSRRDSFITHRAFCEA) form a CCHC-type 2; atypical zinc finger. Residues 213 to 225 (RRDSFITHRAFCE) are SHR-binding. Disordered regions lie at residues 255–280 (ASHP…SHNH) and 334–358 (PQPH…SLFS). The segment covering 264–280 (TQPTINVSSSSSSSHNH) has biased composition (low complexity).

The protein localises to the nucleus. In terms of biological role, probable transcription factor. This is Protein indeterminate-domain 11 from Arabidopsis thaliana (Mouse-ear cress).